The chain runs to 331 residues: Centriolar satellite-associated tubulin polyglutamylase complex regulator 1 (331 aa).

A required for interaction with PCM1 region spans residues 1–111; the sequence is MLSPERLALP…HCLLQLLCPD (111 aa). The required for interaction with TPGS1, LRRC49, and TTLL1 stretch occupies residues 1 to 225; that stretch reads MLSPERLALP…SCPPPALVKE (225 aa). The required for interaction with TPGS2 stretch occupies residues 112-331; it reads FPLELTQKAA…STEETDESET (220 aa). The tract at residues 292–331 is disordered; it reads SCLPSRTPPRVGSPWKPLHRSRKLDAESDGSTEETDESET. Residues 318–331 are compositionally biased toward acidic residues; sequence ESDGSTEETDESET. Ser319 carries the phosphoserine modification.

The protein belongs to the CSTPP1 family. Interacts with PCM1. Interacts with TTLL1, TPGS1, TPGS2 and LRRC49; the interactions link CSTPP1 to the complex TPGC. Binds to alpha-tubulin.

It is found in the cytoplasm. The protein resides in the cytoskeleton. The protein localises to the microtubule organizing center. It localises to the centrosome. Its subcellular location is the centriolar satellite. Functionally, regulator of the tubulin polyglutamylase complex (TPGC) that controls cytoskeletal organization, nuclear shape, and cilium disassembly by balancing microtubule and actin assembly. Regulates the assembly and stability of the TPGC and thereby modulates polyglutamylation of the microtubule, which antagonizes MAP4 binding. The polypeptide is Centriolar satellite-associated tubulin polyglutamylase complex regulator 1 (Mus musculus (Mouse)).